Reading from the N-terminus, the 311-residue chain is Probable manganese-dependent inorganic pyrophosphatase (311 aa).

Mn(2+) is bound by residues His-9, Asp-13, Asp-15, Asp-77, His-99, and Asp-151.

This sequence belongs to the PPase class C family. Mn(2+) serves as cofactor.

It is found in the cytoplasm. It catalyses the reaction diphosphate + H2O = 2 phosphate + H(+). This Streptococcus equi subsp. equi (strain 4047) protein is Probable manganese-dependent inorganic pyrophosphatase.